A 133-amino-acid chain; its full sequence is Cell division protein FtsL (133 aa).

Over 1 to 45 (MAVEKVYQPYDEQVYNSIPKQQPQTKPEKKTVSRKVVVQLTKFEK) the chain is Cytoplasmic. A helical membrane pass occupies residues 46–65 (VLYITLITVIAMLSIYMLSL). The Extracellular segment spans residues 66–133 (KMDAYDTRGK…VVRSNGEAKN (68 aa)).

Belongs to the FtsL family.

It localises to the cell membrane. In terms of biological role, essential cell division protein. In Staphylococcus aureus (strain NCTC 8325 / PS 47), this protein is Cell division protein FtsL.